Here is a 120-residue protein sequence, read N- to C-terminus: Secreted RxLR effector protein RXLR-C26 (120 aa).

Positions 1–29 are cleaved as a signal peptide; the sequence is MTGILCFPPFARFFMLLSGCAWLAGVSSG. The RxLR-dEER motif lies at 57 to 77; the sequence is RNLRGHINSAIIEANDTSEER. N-linked (GlcNAc...) asparagine glycosylation occurs at N71.

The protein belongs to the RxLR effector family.

The protein localises to the secreted. It is found in the host cytoplasm. It localises to the host nucleus. Secreted effector that does not suppress pattern-triggered immunity (PTI) in plant host. In Plasmopara halstedii (Downy mildew of sunflower), this protein is Secreted RxLR effector protein RXLR-C26.